The sequence spans 146 residues: Snaclec 4 (146 aa).

The signal sequence occupies residues 1–23 (MGRFISISFGLLVVFLSLSGTEA). 3 cysteine pairs are disulfide-bonded: C27–C38, C55–C144, and C121–C136. One can recognise a C-type lectin domain in the interval 34 to 145 (YDQNCYKVFT…CNFIAPVVCK (112 aa)).

Belongs to the snaclec family. Heterodimer; disulfide-linked.

The protein resides in the secreted. Its function is as follows. Interferes with one step of hemostasis (modulation of platelet aggregation, or coagulation cascade, for example). This is Snaclec 4 from Daboia siamensis (Eastern Russel's viper).